Consider the following 830-residue polypeptide: V-type proton ATPase 116 kDa subunit a 3 (830 aa).

The Cytoplasmic portion of the chain corresponds to 1-385 (MGSMFRSEEV…DAYGVGRYQE (385 aa)). The disordered stretch occupies residues 139-158 (QLAAAHTDGASERTPLLQAP). The helical transmembrane segment at 386–404 (VNPAPYTIITFPFLFAVMF) threads the bilayer. At 405–406 (GD) the chain is on the vacuolar side. Residues 407–423 (VGHGLLMFLFALAMVLA) traverse the membrane as a helical segment. Topologically, residues 424-438 (ENRPAVKAAQNEIWQ) are cytoplasmic. Residues 439–468 (TFFRGRYLLLLMGLFSIYTGFIYNECFSRA) traverse the membrane as a helical segment. Topologically, residues 469 to 532 (TSIFPSGWSV…AANHLSFLNS (64 aa)) are vacuolar. A helical transmembrane segment spans residues 533–552 (FKMKMSVILGVVHMAFGVVL). Residues 553 to 570 (GVFNHVHFGQRHRLLLET) are Cytoplasmic-facing. The helical transmembrane segment at 571-591 (LPELTFLLGLFGYLVFLVIYK) threads the bilayer. The Vacuolar segment spans residues 592–635 (WLCVWAARAASAPSILIHFINMFLFSHSPSNRLLYPRQEVVQAT). Residues 636–655 (LVVLALAMVPILLLGTPLHL) form a helical membrane-spanning segment. Residues 656 to 720 (LHRHRRRLRR…EVLMHQAIHT (65 aa)) lie on the Cytoplasmic side of the membrane. The disordered stretch occupies residues 681-701 (LPDASVNGWSSDEEKAGGLDD). A helical membrane pass occupies residues 721–745 (IEFCLGCVSNTASYLRLWALSLAHA). Topologically, residues 746 to 766 (QLSEVLWAMVMRIGLGLGREV) are vacuolar. A helical membrane pass occupies residues 767–807 (GVAAVVLVPIFAAFAVMTVAILLVMEGLSAFLHALRLHWVE). At 808 to 830 (FQNKFYSGTGYKLSPFTFAATDD) the chain is on the cytoplasmic side.

It belongs to the V-ATPase 116 kDa subunit family. As to quaternary structure, V-ATPase is a heteromultimeric enzyme made up of two complexes: the ATP-hydrolytic V1 complex and the proton translocation V0 complex. The V1 complex consists of three catalytic AB heterodimers that form a heterohexamer, three peripheral stalks each consisting of EG heterodimers, one central rotor including subunits D and F, and the regulatory subunits C and H. The proton translocation complex V0 consists of the proton transport subunit a, a ring of proteolipid subunits c9c'', rotary subunit d, subunits e and f, and the accessory subunits ATP6AP1/Ac45 and ATP6AP2/PRR. In terms of tissue distribution, isoform long is highly expressed in osteoclastomas. Isoform short is highly expressed in thymus.

Its subcellular location is the membrane. Its function is as follows. Subunit of the V0 complex of vacuolar(H+)-ATPase (V-ATPase), a multisubunit enzyme composed of a peripheral complex (V1) that hydrolyzes ATP and a membrane integral complex (V0) that translocates protons. V-ATPase is responsible for acidifying and maintaining the pH of intracellular compartments and in some cell types, is targeted to the plasma membrane, where it is responsible for acidifying the extracellular environment. Seems to be directly involved in T-cell activation. The protein is V-type proton ATPase 116 kDa subunit a 3 (TCIRG1) of Homo sapiens (Human).